We begin with the raw amino-acid sequence, 265 residues long: 4-hydroxy-tetrahydrodipicolinate reductase (265 aa).

NAD(+) contacts are provided by residues 7-12 (GASGRM) and Asp33. Arg34 contacts NADP(+). Residues 96–98 (GTT) and 120–123 (AANM) contribute to the NAD(+) site. His153 serves as the catalytic Proton donor/acceptor. Residue His154 coordinates (S)-2,3,4,5-tetrahydrodipicolinate. The Proton donor role is filled by Lys157. 163-164 (GT) provides a ligand contact to (S)-2,3,4,5-tetrahydrodipicolinate.

The protein belongs to the DapB family.

The protein resides in the cytoplasm. It carries out the reaction (S)-2,3,4,5-tetrahydrodipicolinate + NAD(+) + H2O = (2S,4S)-4-hydroxy-2,3,4,5-tetrahydrodipicolinate + NADH + H(+). It catalyses the reaction (S)-2,3,4,5-tetrahydrodipicolinate + NADP(+) + H2O = (2S,4S)-4-hydroxy-2,3,4,5-tetrahydrodipicolinate + NADPH + H(+). It participates in amino-acid biosynthesis; L-lysine biosynthesis via DAP pathway; (S)-tetrahydrodipicolinate from L-aspartate: step 4/4. Its function is as follows. Catalyzes the conversion of 4-hydroxy-tetrahydrodipicolinate (HTPA) to tetrahydrodipicolinate. The polypeptide is 4-hydroxy-tetrahydrodipicolinate reductase (Burkholderia cenocepacia (strain ATCC BAA-245 / DSM 16553 / LMG 16656 / NCTC 13227 / J2315 / CF5610) (Burkholderia cepacia (strain J2315))).